The chain runs to 158 residues: Protein shisa-like-2B (158 aa).

Residues 65–85 (IGALVGLGIAALVLLAFVISV) form a helical membrane-spanning segment.

The protein belongs to the shisa family.

The protein resides in the membrane. The protein is Protein shisa-like-2B (Shisal2b) of Mus musculus (Mouse).